A 216-amino-acid chain; its full sequence is Probable GTP-binding protein EngB (216 aa).

Residues 27-201 (EGIEVAFAGR…REKLDTWFSE (175 aa)) form the EngB-type G domain. GTP contacts are provided by residues 35–42 (GRSNAGKS), 62–66 (GRTQL), 80–83 (DLPG), 147–150 (TKAD), and 180–182 (FSS). The Mg(2+) site is built by Ser-42 and Thr-64.

Belongs to the TRAFAC class TrmE-Era-EngA-EngB-Septin-like GTPase superfamily. EngB GTPase family. It depends on Mg(2+) as a cofactor.

In terms of biological role, necessary for normal cell division and for the maintenance of normal septation. The protein is Probable GTP-binding protein EngB of Yersinia pseudotuberculosis serotype O:1b (strain IP 31758).